Reading from the N-terminus, the 1159-residue chain is Ferroxidase HEPHL1 (1159 aa).

The N-terminal stretch at M1–A23 is a signal peptide. Plastocyanin-like domains are found at residues V24–C206, M217–C365, Q378–C560, T570–C718, M730–C906, and K914–Q1092. Over V24–A1114 the chain is Extracellular. Residues H126 and H128 each coordinate Cu cation. N160 carries an N-linked (GlcNAc...) asparagine glycan. A disulfide bridge links C180 with C206. Positions 186 and 188 each coordinate Cu cation. N235 carries N-linked (GlcNAc...) asparagine glycosylation. C284 and C365 are joined by a disulfide. Residues H303, C346, and H351 each coordinate Cu cation. N406 carries N-linked (GlcNAc...) asparagine glycosylation. C534 and C560 are disulfide-bonded. N-linked (GlcNAc...) asparagine glycosylation occurs at N588. The cysteines at positions 637 and 718 are disulfide-linked. H656, C699, H704, and M709 together coordinate Cu cation. N771 carries N-linked (GlcNAc...) asparagine glycosylation. Cysteines 880 and 906 form a disulfide. Residue N934 is glycosylated (N-linked (GlcNAc...) asparagine). Cu cation-binding residues include H1002, H1005, H1007, H1047, C1048, H1049, H1053, and M1058. The chain crosses the membrane as a helical span at residues A1115–L1135. Residues R1136–L1159 lie on the Cytoplasmic side of the membrane.

Belongs to the multicopper oxidase family. The cofactor is Cu cation.

It localises to the membrane. It carries out the reaction 4 Fe(2+) + O2 + 4 H(+) = 4 Fe(3+) + 2 H2O. Its function is as follows. Is a copper-binding glycoprotein with ferroxidase activity. It oxidizes Fe(2+) to Fe(3+) without releasing radical oxygen species. May be involved in the regulation of intracellular iron content. This chain is Ferroxidase HEPHL1 (Hephl1), found in Mus musculus (Mouse).